Consider the following 37-residue polypeptide: Large ribosomal subunit protein bL36 (37 aa).

The protein belongs to the bacterial ribosomal protein bL36 family.

The chain is Large ribosomal subunit protein bL36 (rpmJ) from Mycoplasmoides gallisepticum (strain R(low / passage 15 / clone 2)) (Mycoplasma gallisepticum).